An 835-amino-acid chain; its full sequence is Protein translocase subunit SecA 1 (835 aa).

ATP is bound by residues Q85, G103–T107, and D492. Positions V788–V807 are disordered. Zn(2+) is bound by residues C819, C821, C830, and C831.

Belongs to the SecA family. As to quaternary structure, monomer and homodimer. Part of the essential Sec protein translocation apparatus which comprises SecA, SecYEG and auxiliary proteins SecDF. Other proteins may also be involved. Zn(2+) is required as a cofactor.

It is found in the cell membrane. The protein localises to the cytoplasm. It catalyses the reaction ATP + H2O + cellular proteinSide 1 = ADP + phosphate + cellular proteinSide 2.. In terms of biological role, part of the Sec protein translocase complex. Interacts with the SecYEG preprotein conducting channel. Has a central role in coupling the hydrolysis of ATP to the transfer of proteins into and across the cell membrane, serving as an ATP-driven molecular motor driving the stepwise translocation of polypeptide chains across the membrane. The protein is Protein translocase subunit SecA 1 of Bacillus thuringiensis subsp. konkukian (strain 97-27).